Here is a 205-residue protein sequence, read N- to C-terminus: Imidazoleglycerol-phosphate dehydratase (205 aa).

This sequence belongs to the imidazoleglycerol-phosphate dehydratase family.

The enzyme catalyses D-erythro-1-(imidazol-4-yl)glycerol 3-phosphate = 3-(imidazol-4-yl)-2-oxopropyl phosphate + H2O. Its pathway is amino-acid biosynthesis; L-histidine biosynthesis; L-histidine from 5-phospho-alpha-D-ribose 1-diphosphate: step 6/9. This chain is Imidazoleglycerol-phosphate dehydratase (HIS3), found in Phaffia rhodozyma (Yeast).